A 285-amino-acid chain; its full sequence is MRVLVISGLSGSGKSTAVRVLEDEGFFCIDNLPVQLFPTIIDLVNKAQETVPGVALVMDIRGRDFLKGFEKIFQEIDDAGHTIEIIFFDATDEVLIRRFSETRRRHPALESGSVPEGIRYEREQLSGLRRLATLVIDTSELNVHQLKEMVLARVKGEAGARRMTIHLQSFGYRYGIPLESDLVMDVRFLSNPHFVPELKPLSGLDPGVRNFVLEKPETTQFLARFEGLLEYLLPAYQREGKSYLTISIGCTGGRHRSVALVEELRRFFDRAGIAVKVSHRDMEKG.

Residue 8–15 coordinates ATP; it reads GLSGSGKS. 59-62 lines the GTP pocket; it reads DIRG.

Belongs to the RapZ-like family.

In terms of biological role, displays ATPase and GTPase activities. The chain is Nucleotide-binding protein Gmet_1286 from Geobacter metallireducens (strain ATCC 53774 / DSM 7210 / GS-15).